We begin with the raw amino-acid sequence, 89 residues long: uncharacterized protein (89 aa).

The next 3 membrane-spanning stretches (helical) occupy residues 5 to 25 (AYLV…KRKA), 36 to 56 (RLWL…MQTF), and 67 to 87 (YGVP…YSPF).

The protein resides in the cell membrane. This is an uncharacterized protein from Bacillus subtilis (strain 168).